Here is a 555-residue protein sequence, read N- to C-terminus: Urocanate hydratase (555 aa).

Residues 52 to 53 (GG), Q130, 176 to 178 (GMG), E196, R201, 242 to 243 (NA), 263 to 267 (QTSAH), 273 to 274 (YL), and Y322 each bind NAD(+). The active site involves C410. Residue G492 coordinates NAD(+).

The protein belongs to the urocanase family. Requires NAD(+) as cofactor.

Its subcellular location is the cytoplasm. It carries out the reaction 4-imidazolone-5-propanoate = trans-urocanate + H2O. The protein operates within amino-acid degradation; L-histidine degradation into L-glutamate; N-formimidoyl-L-glutamate from L-histidine: step 2/3. Catalyzes the conversion of urocanate to 4-imidazolone-5-propionate. This Shewanella baltica (strain OS195) protein is Urocanate hydratase.